The sequence spans 176 residues: 3-hydroxyacyl-[acyl-carrier-protein] dehydratase FabZ (176 aa).

Residue His54 is part of the active site.

Belongs to the thioester dehydratase family. FabZ subfamily.

It is found in the cytoplasm. It catalyses the reaction a (3R)-hydroxyacyl-[ACP] = a (2E)-enoyl-[ACP] + H2O. Its function is as follows. Involved in unsaturated fatty acids biosynthesis. Catalyzes the dehydration of short chain beta-hydroxyacyl-ACPs and long chain saturated and unsaturated beta-hydroxyacyl-ACPs. This Yersinia pseudotuberculosis serotype O:1b (strain IP 31758) protein is 3-hydroxyacyl-[acyl-carrier-protein] dehydratase FabZ.